Consider the following 213-residue polypeptide: Ribosomal RNA small subunit methyltransferase G (213 aa).

S-adenosyl-L-methionine is bound by residues glycine 83, leucine 88, 132–133 (IE), and arginine 146.

Belongs to the methyltransferase superfamily. RNA methyltransferase RsmG family.

The protein resides in the cytoplasm. The catalysed reaction is guanosine(527) in 16S rRNA + S-adenosyl-L-methionine = N(7)-methylguanosine(527) in 16S rRNA + S-adenosyl-L-homocysteine. Its function is as follows. Specifically methylates the N7 position of guanine in position 527 of 16S rRNA. This chain is Ribosomal RNA small subunit methyltransferase G, found in Granulibacter bethesdensis (strain ATCC BAA-1260 / CGDNIH1).